The primary structure comprises 258 residues: UPF0246 protein YaaA (258 aa).

This sequence belongs to the UPF0246 family.

This Escherichia coli O6:K15:H31 (strain 536 / UPEC) protein is UPF0246 protein YaaA.